The sequence spans 220 residues: Urease accessory protein UreE (220 aa).

Residues 145-220 are disordered; that stretch reads EGGAYSAGGH…QIHKRRPDNL (76 aa). Residues 156–177 show a composition bias toward basic and acidic residues; sequence HGHDHGSHEHSAHDHGKHDHAP. Low complexity predominate over residues 178-188; that stretch reads AKPATAATPAA. Over residues 191-206 the composition is skewed to basic and acidic residues; it reads HGPDCNHGHDHAHEAK.

It belongs to the UreE family.

It is found in the cytoplasm. Functionally, involved in urease metallocenter assembly. Binds nickel. Probably functions as a nickel donor during metallocenter assembly. The sequence is that of Urease accessory protein UreE from Polaromonas sp. (strain JS666 / ATCC BAA-500).